Consider the following 382-residue polypeptide: uncharacterized protein (382 aa).

A run of 12 helical transmembrane segments spans residues Val-8–Leu-28, Met-45–Ile-65, Tyr-75–Trp-95, Phe-102–Ser-122, Leu-131–Ser-151, Leu-157–Phe-177, Leu-204–Pro-224, Gly-231–Gly-251, Val-270–Pro-290, Ala-291–Cys-311, Ala-325–Met-345, and Ser-349–Leu-369.

It belongs to the major facilitator superfamily. YcaD (TC 2.A.1.26) family.

The protein localises to the cell inner membrane. This is an uncharacterized protein from Salmonella enteritidis PT4 (strain P125109).